Consider the following 206-residue polypeptide: Ion-translocating oxidoreductase complex subunit G (206 aa).

A helical membrane pass occupies residues 9–29 (GITLALFAAGSTGLTAAINQM). Residue Thr-174 is modified to FMN phosphoryl threonine.

It belongs to the RnfG family. In terms of assembly, the complex is composed of six subunits: RsxA, RsxB, RsxC, RsxD, RsxE and RsxG. Requires FMN as cofactor.

The protein localises to the cell inner membrane. Functionally, part of a membrane-bound complex that couples electron transfer with translocation of ions across the membrane. Required to maintain the reduced state of SoxR. This Escherichia coli O157:H7 protein is Ion-translocating oxidoreductase complex subunit G.